Reading from the N-terminus, the 534-residue chain is SWI/SNF complex component SNF12 homolog (534 aa).

A compositionally biased stretch (polar residues) spans 1 to 12 (MSGNNNNPQKPQ). Disordered regions lie at residues 1–33 (MSGN…PGNQ) and 78–132 (MTMN…SPMR). Low complexity predominate over residues 94–105 (PSSPSLTTPGSL). An SWIB/MDM2 domain is found at 314–391 (YVPEKFKLST…SQKISHHLSP (78 aa)).

This sequence belongs to the SMARCD family. Part of a SWI-SNF complex.

It localises to the nucleus. Functionally, involved in transcriptional activation and repression of select genes by chromatin remodeling (alteration of DNA-nucleosome topology). This is SWI/SNF complex component SNF12 homolog from Arabidopsis thaliana (Mouse-ear cress).